The sequence spans 1382 residues: DNA-directed RNA polymerase subunit beta (1382 aa).

Belongs to the RNA polymerase beta chain family. In terms of assembly, the RNAP catalytic core consists of 2 alpha, 1 beta, 1 beta' and 1 omega subunit. When a sigma factor is associated with the core the holoenzyme is formed, which can initiate transcription.

It carries out the reaction RNA(n) + a ribonucleoside 5'-triphosphate = RNA(n+1) + diphosphate. Functionally, DNA-dependent RNA polymerase catalyzes the transcription of DNA into RNA using the four ribonucleoside triphosphates as substrates. The protein is DNA-directed RNA polymerase subunit beta of Paracoccus denitrificans (strain Pd 1222).